We begin with the raw amino-acid sequence, 1578 residues long: Pentafunctional AROM polypeptide (1578 aa).

Residues Met-1–Asp-393 form a 3-dehydroquinate synthase region. NAD(+) contacts are provided by residues Asp-44 to Asn-46, Glu-79 to Lys-82, Gly-110 to Val-112, and Asp-115. Position 126 (Arg-126) interacts with 7-phospho-2-dehydro-3-deoxy-D-arabino-heptonate. An NAD(+)-binding site is contributed by Thr-135–Ser-136. 7-phospho-2-dehydro-3-deoxy-D-arabino-heptonate-binding residues include Asp-142 and Lys-148. Lys-157 contributes to the NAD(+) binding site. 7-phospho-2-dehydro-3-deoxy-D-arabino-heptonate is bound at residue Asn-158. NAD(+)-binding positions include Trp-175–Thr-178 and Asn-186. Glu-190 is a Zn(2+) binding site. 7-phospho-2-dehydro-3-deoxy-D-arabino-heptonate-binding positions include Glu-190–Lys-193 and Lys-259. Glu-269 serves as the catalytic Proton acceptor; for 3-dehydroquinate synthase activity. 7-phospho-2-dehydro-3-deoxy-D-arabino-heptonate contacts are provided by residues Arg-273–Asn-277 and His-280. His-280 contributes to the Zn(2+) binding site. The Proton acceptor; for 3-dehydroquinate synthase activity role is filled by His-284. Residues His-296 and Lys-365 each coordinate 7-phospho-2-dehydro-3-deoxy-D-arabino-heptonate. Position 296 (His-296) interacts with Zn(2+). The interval Val-406–Ala-863 is EPSP synthase. Cys-845 serves as the catalytic For EPSP synthase activity. The shikimate kinase stretch occupies residues Val-882–Cys-1071. Gly-886–Ser-893 lines the ATP pocket. The segment at Leu-1072–Glu-1284 is 3-dehydroquinase. His-1189 serves as the catalytic Proton acceptor; for 3-dehydroquinate dehydratase activity. The Schiff-base intermediate with substrate; for 3-dehydroquinate dehydratase activity role is filled by Lys-1218. The segment at Ala-1297–Glu-1578 is shikimate dehydrogenase.

It in the N-terminal section; belongs to the sugar phosphate cyclases superfamily. Dehydroquinate synthase family. This sequence in the 2nd section; belongs to the EPSP synthase family. In the 3rd section; belongs to the shikimate kinase family. The protein in the 4th section; belongs to the type-I 3-dehydroquinase family. It in the C-terminal section; belongs to the shikimate dehydrogenase family. Homodimer. Zn(2+) serves as cofactor.

The protein resides in the cytoplasm. The catalysed reaction is 7-phospho-2-dehydro-3-deoxy-D-arabino-heptonate = 3-dehydroquinate + phosphate. It catalyses the reaction 3-dehydroquinate = 3-dehydroshikimate + H2O. The enzyme catalyses shikimate + NADP(+) = 3-dehydroshikimate + NADPH + H(+). It carries out the reaction shikimate + ATP = 3-phosphoshikimate + ADP + H(+). The catalysed reaction is 3-phosphoshikimate + phosphoenolpyruvate = 5-O-(1-carboxyvinyl)-3-phosphoshikimate + phosphate. It participates in metabolic intermediate biosynthesis; chorismate biosynthesis; chorismate from D-erythrose 4-phosphate and phosphoenolpyruvate: step 2/7. Its pathway is metabolic intermediate biosynthesis; chorismate biosynthesis; chorismate from D-erythrose 4-phosphate and phosphoenolpyruvate: step 3/7. The protein operates within metabolic intermediate biosynthesis; chorismate biosynthesis; chorismate from D-erythrose 4-phosphate and phosphoenolpyruvate: step 4/7. It functions in the pathway metabolic intermediate biosynthesis; chorismate biosynthesis; chorismate from D-erythrose 4-phosphate and phosphoenolpyruvate: step 5/7. It participates in metabolic intermediate biosynthesis; chorismate biosynthesis; chorismate from D-erythrose 4-phosphate and phosphoenolpyruvate: step 6/7. Its function is as follows. The AROM polypeptide catalyzes 5 consecutive enzymatic reactions in prechorismate polyaromatic amino acid biosynthesis. This chain is Pentafunctional AROM polypeptide, found in Kluyveromyces lactis (strain ATCC 8585 / CBS 2359 / DSM 70799 / NBRC 1267 / NRRL Y-1140 / WM37) (Yeast).